A 320-amino-acid polypeptide reads, in one-letter code: Replication-associated protein ORF2 (320 aa).

Residues Tyr188 and Tyr192 each act as O-(5'-phospho-DNA)-tyrosine intermediate in the active site.

The protein belongs to the microviridae Rep protein family.

The enzyme catalyses ATP + (deoxyribonucleotide)n-3'-hydroxyl + 5'-phospho-(deoxyribonucleotide)m = (deoxyribonucleotide)n+m + AMP + diphosphate.. Plays an essential role in viral DNA replication. Binds the origin of replication and cleaves the dsDNA replicative form I (RFI) and becomes covalently bound to it via phosphotyrosine bond, generating the dsDNA replicative form II (RFII). In turn, viral DNA replication initiates at the 3'-OH of the cleavage site. After one round of rolling circle synthesis, protein ORF2 is linked to the newly synthesized ssDNA and joins the ends of the displaced strand to generate a circular single-stranded molecule ready to be packed into a virion. The sequence is that of Replication-associated protein ORF2 from Spiroplasma virus 4 (SpV4).